The chain runs to 438 residues: Chromosomal replication initiator protein DnaA (438 aa).

The segment at 1–74 (MNEINKIWQK…SFYQITGSQV (74 aa)) is domain I, interacts with DnaA modulators. A domain II region spans residues 74–100 (VEVKYIITGKEHETGLIEEKKQVIKKG). The tract at residues 101 to 317 (NLNPKYTFDT…GSLIKLCAYT (217 aa)) is domain III, AAA+ region. Residues Gly145, Gly147, Lys148, and Thr149 each contribute to the ATP site. The domain IV, binds dsDNA stretch occupies residues 318–438 (SLTKVPISMD…DSIIKKVTGQ (121 aa)).

This sequence belongs to the DnaA family. In terms of assembly, oligomerizes as a right-handed, spiral filament on DNA at oriC.

Its subcellular location is the cytoplasm. Plays an essential role in the initiation and regulation of chromosomal replication. ATP-DnaA binds to the origin of replication (oriC) to initiate formation of the DNA replication initiation complex once per cell cycle. Binds the DnaA box (a 9 base pair repeat at the origin) and separates the double-stranded (ds)DNA. Forms a right-handed helical filament on oriC DNA; dsDNA binds to the exterior of the filament while single-stranded (ss)DNA is stabiized in the filament's interior. The ATP-DnaA-oriC complex binds and stabilizes one strand of the AT-rich DNA unwinding element (DUE), permitting loading of DNA polymerase. After initiation quickly degrades to an ADP-DnaA complex that is not apt for DNA replication. Binds acidic phospholipids. This chain is Chromosomal replication initiator protein DnaA, found in Thermodesulfovibrio yellowstonii (strain ATCC 51303 / DSM 11347 / YP87).